The sequence spans 149 residues: Probable flagellum biosynthesis repressor protein FlbT (149 aa).

The protein belongs to the FlbT family.

Functionally, has a post-transcriptional repressor function in flagellum biogenesis. Associates with the 5'-UTR of fljK mRNA and promotes its degradation. In Rhizobium johnstonii (strain DSM 114642 / LMG 32736 / 3841) (Rhizobium leguminosarum bv. viciae), this protein is Probable flagellum biosynthesis repressor protein FlbT.